Here is a 283-residue protein sequence, read N- to C-terminus: MKVLFNGRLMERSECAVDIEDRGYQFGDGVYEVIRIYNGILFTLDEHIARLYKSAAEIGIDLSFSEAELKSQLKELVDINQRRDGGLYLQVTRGKAPRKHQYGAGLTPQVTAYTFPIQKPEKEQQNGVSAITADDMRWLRCDIKSLNLLYNVMIKQKAQEASAFEAILIRDGLVTEGTSSNVYVAKQNVIYTHPVTTLILNGITRMKVLQLCEENGLNYEEKAVTKDELLNADEVFITSTTAEVIPVTSIDGQTIGSGAPGPLTKNVQTALQNSILSETAKTV.

Tyr31 serves as a coordination point for substrate. Arg50 is a pyridoxal 5'-phosphate binding site. Residues Arg98 and His100 each contribute to the substrate site. Catalysis depends on Lys144, which acts as the Proton acceptor. The residue at position 144 (Lys144) is an N6-(pyridoxal phosphate)lysine. Residue Glu176 coordinates pyridoxal 5'-phosphate.

It belongs to the class-IV pyridoxal-phosphate-dependent aminotransferase family. Homodimer. The cofactor is pyridoxal 5'-phosphate.

The enzyme catalyses D-alanine + 2-oxoglutarate = D-glutamate + pyruvate. Functionally, acts on the D-isomers of alanine, leucine, aspartate, glutamate, aminobutyrate, norvaline and asparagine. The enzyme transfers an amino group from a substrate D-amino acid to the pyridoxal phosphate cofactor to form pyridoxamine and an alpha-keto acid in the first half-reaction. The second half-reaction is the reverse of the first, transferring the amino group from the pyridoxamine to a second alpha-keto acid to form the product D-amino acid via a ping-pong mechanism. This is an important process in the formation of D-alanine and D-glutamate, which are essential bacterial cell wall components. This Bacillus licheniformis protein is D-alanine aminotransferase (dat).